The sequence spans 159 residues: 2-C-methyl-D-erythritol 2,4-cyclodiphosphate synthase (159 aa).

Positions 10 and 12 each coordinate a divalent metal cation. Residues 10–12 (DVH) and 36–37 (HS) each bind 4-CDP-2-C-methyl-D-erythritol 2-phosphate. Histidine 44 lines the a divalent metal cation pocket. 4-CDP-2-C-methyl-D-erythritol 2-phosphate contacts are provided by residues 58 to 60 (DIG), 63 to 67 (FPDTD), 102 to 108 (AQAPKMA), 134 to 137 (TTTE), phenylalanine 141, and arginine 144.

This sequence belongs to the IspF family. In terms of assembly, homotrimer. A divalent metal cation is required as a cofactor.

The enzyme catalyses 4-CDP-2-C-methyl-D-erythritol 2-phosphate = 2-C-methyl-D-erythritol 2,4-cyclic diphosphate + CMP. It functions in the pathway isoprenoid biosynthesis; isopentenyl diphosphate biosynthesis via DXP pathway; isopentenyl diphosphate from 1-deoxy-D-xylulose 5-phosphate: step 4/6. Involved in the biosynthesis of isopentenyl diphosphate (IPP) and dimethylallyl diphosphate (DMAPP), two major building blocks of isoprenoid compounds. Catalyzes the conversion of 4-diphosphocytidyl-2-C-methyl-D-erythritol 2-phosphate (CDP-ME2P) to 2-C-methyl-D-erythritol 2,4-cyclodiphosphate (ME-CPP) with a corresponding release of cytidine 5-monophosphate (CMP). The protein is 2-C-methyl-D-erythritol 2,4-cyclodiphosphate synthase of Shewanella piezotolerans (strain WP3 / JCM 13877).